Here is a 297-residue protein sequence, read N- to C-terminus: tRNA pseudouridine synthase B (297 aa).

Asp44 functions as the Nucleophile in the catalytic mechanism.

The protein belongs to the pseudouridine synthase TruB family. Type 1 subfamily.

The catalysed reaction is uridine(55) in tRNA = pseudouridine(55) in tRNA. In terms of biological role, responsible for synthesis of pseudouridine from uracil-55 in the psi GC loop of transfer RNAs. The chain is tRNA pseudouridine synthase B from Corynebacterium glutamicum (strain ATCC 13032 / DSM 20300 / JCM 1318 / BCRC 11384 / CCUG 27702 / LMG 3730 / NBRC 12168 / NCIMB 10025 / NRRL B-2784 / 534).